The primary structure comprises 246 residues: Major prion protein (246 aa).

Positions M1–C15 are cleaved as a signal peptide. The interaction with GRB2, ERI3 and SYN1 stretch occupies residues K16–S223. Residues R18–M102 are disordered. A run of 5 repeats spans residues P44 to Q52, P53 to Q60, P61 to Q68, P69 to Q76, and P77 to Q84. Positions P44–Q84 are 5 X 8 AA tandem repeats of P-H-G-G-G-W-G-Q. Positions Q45 to T88 are enriched in gly residues. Residues H54, G55, G56, H62, G63, G64, H70, G71, G72, H78, G79, and G80 each coordinate Cu(2+). Positions Q91 to M102 are enriched in basic residues. A disulfide bridge links C172 with C207. Residues N174 and N190 are each glycosylated (N-linked (GlcNAc...) asparagine). S223 is lipidated: GPI-anchor amidated serine. The propeptide at S224–G246 is removed in mature form.

Belongs to the prion family. As to quaternary structure, monomer and homodimer. Has a tendency to aggregate into amyloid fibrils containing a cross-beta spine, formed by a steric zipper of superposed beta-strands. Soluble oligomers may represent an intermediate stage on the path to fibril formation. Copper binding may promote oligomerization. Interacts with GRB2, APP, ERI3/PRNPIP and SYN1. Mislocalized cytosolically exposed PrP interacts with MGRN1; this interaction alters MGRN1 subcellular location and causes lysosomal enlargement. Interacts with KIAA1191.

Its subcellular location is the cell membrane. It is found in the golgi apparatus. Its primary physiological function is unclear. Has cytoprotective activity against internal or environmental stresses. May play a role in neuronal development and synaptic plasticity. May be required for neuronal myelin sheath maintenance. May play a role in iron uptake and iron homeostasis. Soluble oligomers are toxic to cultured neuroblastoma cells and induce apoptosis (in vitro). Association with GPC1 (via its heparan sulfate chains) targets PRNP to lipid rafts. Also provides Cu(2+) or Zn(2+) for the ascorbate-mediated GPC1 deaminase degradation of its heparan sulfate side chains. This Cercopithecus mona (Mona monkey) protein is Major prion protein (PRNP).